The following is a 170-amino-acid chain: tRNA-splicing endonuclease (170 aa).

Active-site residues include Y110, H116, and K147.

The protein belongs to the tRNA-intron endonuclease family. Archaeal short subfamily. As to quaternary structure, homotetramer; although the tetramer contains four active sites, only two participate in the cleavage. Therefore, it should be considered as a dimer of dimers.

It carries out the reaction pretRNA = a 3'-half-tRNA molecule with a 5'-OH end + a 5'-half-tRNA molecule with a 2',3'-cyclic phosphate end + an intron with a 2',3'-cyclic phosphate and a 5'-hydroxyl terminus.. Its function is as follows. Endonuclease that removes tRNA introns. Cleaves pre-tRNA at the 5'- and 3'-splice sites to release the intron. The products are an intron and two tRNA half-molecules bearing 2',3' cyclic phosphate and 5'-OH termini. Recognizes a pseudosymmetric substrate in which 2 bulged loops of 3 bases are separated by a stem of 4 bp. In Pyrococcus abyssi (strain GE5 / Orsay), this protein is tRNA-splicing endonuclease.